Reading from the N-terminus, the 76-residue chain is UPF0291 protein BC_1827 (76 aa).

This sequence belongs to the UPF0291 family.

Its subcellular location is the cytoplasm. In Bacillus cereus (strain ATCC 14579 / DSM 31 / CCUG 7414 / JCM 2152 / NBRC 15305 / NCIMB 9373 / NCTC 2599 / NRRL B-3711), this protein is UPF0291 protein BC_1827.